A 176-amino-acid chain; its full sequence is Ribosome maturation factor RimM (176 aa).

Residues 93 to 166 enclose the PRC barrel domain; sequence ADEYYHADLI…QVVIEPPNEI (74 aa).

This sequence belongs to the RimM family. As to quaternary structure, binds ribosomal protein uS19.

The protein resides in the cytoplasm. In terms of biological role, an accessory protein needed during the final step in the assembly of 30S ribosomal subunit, possibly for assembly of the head region. Essential for efficient processing of 16S rRNA. May be needed both before and after RbfA during the maturation of 16S rRNA. It has affinity for free ribosomal 30S subunits but not for 70S ribosomes. The protein is Ribosome maturation factor RimM of Rhodopseudomonas palustris (strain ATCC BAA-98 / CGA009).